The chain runs to 194 residues: ATP synthase subunit 5, mitochondrial (194 aa).

As to quaternary structure, F-type ATP synthases have 2 components, the catalytic core F(1) and the membrane-embedded component F(0), linked together by a central stalk and a peripheral stalk. The central stalk, also called rotor shaft, is often seen as part of F(1). The peripheral stalk is seen as part of F(0). F(0) contains the membrane channel next to the rotor. F-type ATP synthases form dimers but each monomer functions independently in ATP generation. The dimer consists of 18 different polypeptides: ATP1 (subunit alpha, part of F(1), 3 molecules per monomer), ATP2 (subunit beta, part of F(1), 3 molecules per monomer), ATP3 (subunit gamma, part of the central stalk), ATP4 (subunit b, part of the peripheral stalk), ATP5/OSCP (subunit 5/OSCP, part of the peripheral stalk), ATP6 (subunit a, part of the peripheral stalk), ATP7 (subunit d, part of the peripheral stalk), ATP8 (subunit 8, part of the peripheral stalk), OLI1 (subunit c, part of the rotor, 10 molecules per monomer), ATP14 (subunit h, part of the peripheral stalk), ATP15 (subunit epsilon, part of the central stalk), ATP16 (subunit delta, part of the central stalk), ATP17 (subunit f, part of the peripheral stalk), ATP18 (subunit i/j, part of the peripheral stalk). Dimer-specific subunits are ATP19 (subunit k, at interface between monomers), ATP20 (subunit g, at interface between monomers), TIM11 (subunit e, at interface between monomers). Also contains subunit L.

The protein resides in the mitochondrion inner membrane. Its function is as follows. Mitochondrial membrane ATP synthase (F(1)F(0) ATP synthase or Complex V) produces ATP from ADP in the presence of a proton gradient across the membrane which is generated by electron transport complexes of the respiratory chain. F-type ATP synthases consist of two structural domains, F(1) - containing the extramembraneous catalytic core, and F(0) - containing the membrane proton channel, linked together by a central stalk and a peripheral stalk. During catalysis, ATP synthesis in the catalytic domain of F(1) is coupled via a rotary mechanism of the central stalk subunits to proton translocation. Part of the complex F(0) domain and the peripheral stalk, which acts as a stator to hold the catalytic alpha/ATP1(3)beta/ATP2(3) subcomplex and subunit a/ATP6 static relative to the rotary elements. This is ATP synthase subunit 5, mitochondrial from Pichia angusta (Yeast).